The primary structure comprises 282 residues: Ribosomal RNA small subunit methyltransferase A (282 aa).

The S-adenosyl-L-methionine site is built by His11, Leu13, Gly44, Glu65, Asp90, and Asn106.

Belongs to the class I-like SAM-binding methyltransferase superfamily. rRNA adenine N(6)-methyltransferase family. RsmA subfamily.

The protein localises to the cytoplasm. The catalysed reaction is adenosine(1518)/adenosine(1519) in 16S rRNA + 4 S-adenosyl-L-methionine = N(6)-dimethyladenosine(1518)/N(6)-dimethyladenosine(1519) in 16S rRNA + 4 S-adenosyl-L-homocysteine + 4 H(+). In terms of biological role, specifically dimethylates two adjacent adenosines (A1518 and A1519) in the loop of a conserved hairpin near the 3'-end of 16S rRNA in the 30S particle. May play a critical role in biogenesis of 30S subunits. This chain is Ribosomal RNA small subunit methyltransferase A, found in Synechococcus sp. (strain JA-2-3B'a(2-13)) (Cyanobacteria bacterium Yellowstone B-Prime).